The following is a 200-amino-acid chain: Holliday junction branch migration complex subunit RuvA (200 aa).

The domain I stretch occupies residues Met-1–Ser-64. A domain II region spans residues Ser-65–Thr-143. Residues Pro-144–Glu-154 are flexible linker. The interval Glu-154–Arg-200 is domain III.

Belongs to the RuvA family. As to quaternary structure, homotetramer. Forms an RuvA(8)-RuvB(12)-Holliday junction (HJ) complex. HJ DNA is sandwiched between 2 RuvA tetramers; dsDNA enters through RuvA and exits via RuvB. An RuvB hexamer assembles on each DNA strand where it exits the tetramer. Each RuvB hexamer is contacted by two RuvA subunits (via domain III) on 2 adjacent RuvB subunits; this complex drives branch migration. In the full resolvosome a probable DNA-RuvA(4)-RuvB(12)-RuvC(2) complex forms which resolves the HJ.

It localises to the cytoplasm. Its function is as follows. The RuvA-RuvB-RuvC complex processes Holliday junction (HJ) DNA during genetic recombination and DNA repair, while the RuvA-RuvB complex plays an important role in the rescue of blocked DNA replication forks via replication fork reversal (RFR). RuvA specifically binds to HJ cruciform DNA, conferring on it an open structure. The RuvB hexamer acts as an ATP-dependent pump, pulling dsDNA into and through the RuvAB complex. HJ branch migration allows RuvC to scan DNA until it finds its consensus sequence, where it cleaves and resolves the cruciform DNA. This Chlorobium luteolum (strain DSM 273 / BCRC 81028 / 2530) (Pelodictyon luteolum) protein is Holliday junction branch migration complex subunit RuvA.